The primary structure comprises 514 residues: Tryptophan decarboxylase 1 (514 aa).

F104 is a serotonin binding site. Positions 175 and 176 each coordinate pyridoxal 5'-phosphate. H214 lines the serotonin pocket. Residue T273 participates in pyridoxal 5'-phosphate binding. At K330 the chain carries N6-(pyridoxal phosphate)lysine. Y359 (proton donor) is an active-site residue. Residues V380 and G381 each contribute to the pyridoxal 5'-phosphate site.

The protein belongs to the group II decarboxylase family. In terms of assembly, forms homodimers. Pyridoxal 5'-phosphate serves as cofactor.

The catalysed reaction is L-tryptophan + H(+) = tryptamine + CO2. It catalyses the reaction 5-hydroxy-L-tryptophan + H(+) = serotonin + CO2. Functionally, involved in serotonin biosynthesis. Catalyzes the decarboxylation of L-tryptophan to produce tryptamine, which is converted to serotonin by tryptamine 5-hydroxylase. May play a major role in serotonin biosynthesis during senescence. Accumulation of serotonin attenuates leaf senescence. Catalyzes the decarboxylation of 5-hydroxy-L-tryptophan to produce serotonin. This is Tryptophan decarboxylase 1 from Oryza sativa subsp. japonica (Rice).